The chain runs to 4544 residues: Prolow-density lipoprotein receptor-related protein 1 (4544 aa).

A signal peptide spans 1-19; that stretch reads MLTPPLLLLLPLLSALVAA. Residues 20–4419 are Extracellular-facing; sequence AIDAPKTCSP…EHVFSQQQPG (4400 aa). LDL-receptor class A domains are found at residues 25–66 and 70–110; these read KTCS…ICPQ and QRCQ…HCRE. Cystine bridges form between cysteine 27-cysteine 40, cysteine 34-cysteine 53, cysteine 47-cysteine 64, cysteine 72-cysteine 85, cysteine 79-cysteine 98, and cysteine 92-cysteine 108. An EGF-like 1 domain is found at 111–149; sequence LQGNCSRLGCQHHCVPTLDGPTCYCNSSFQLQADGKTCK. An N-linked (GlcNAc...) asparagine glycan is attached at asparagine 114. Intrachain disulfides connect cysteine 115–cysteine 124, cysteine 120–cysteine 133, cysteine 135–cysteine 148, cysteine 154–cysteine 164, cysteine 160–cysteine 173, and cysteine 175–cysteine 188. An N-linked (GlcNAc...) asparagine glycan is attached at asparagine 136. The region spanning 150 to 189 is the EGF-like 2; calcium-binding domain; it reads DFDECSVYGTCSQLCTNTDGSFICGCVEGYLLQPDNRSCK. Asparagine 185, asparagine 239, and asparagine 274 each carry an N-linked (GlcNAc...) asparagine glycan. LDL-receptor class B repeat units lie at residues 292–334, 335–378, and 379–422; these read GNFY…DPAM, GKVF…DLVS, and RLVY…FENY. Asparagine 357 carries N-linked (GlcNAc...) asparagine glycosylation. Residue asparagine 446 is glycosylated (N-linked (GlcNAc...) asparagine). The region spanning 474–520 is the EGF-like 3 domain; sequence RSHACENDQYGKPGGCSDICLLANSHKARTCRCRSGFSLGSDGKSCK. 3 cysteine pairs are disulfide-bonded: cysteine 478/cysteine 493, cysteine 489/cysteine 504, and cysteine 506/cysteine 519. 4 LDL-receptor class B repeats span residues 571 to 613, 614 to 659, 660 to 710, and 711 to 754; these read GFIY…DWMG, DNLY…DPLN, GWMY…DIPA, and GRLY…HGNY. The N-linked (GlcNAc...) (complex) asparagine glycan is linked to asparagine 729. Residues 803-843 enclose the EGF-like 4 domain; it reads GTNKCRVNNGGCSSLCLATPGSRQCACAEDQVLDADGVTCL. Cystine bridges form between cysteine 807-cysteine 818, cysteine 814-cysteine 827, cysteine 829-cysteine 842, cysteine 854-cysteine 866, cysteine 861-cysteine 879, cysteine 873-cysteine 890, cysteine 895-cysteine 907, cysteine 902-cysteine 920, cysteine 914-cysteine 931, cysteine 936-cysteine 948, cysteine 943-cysteine 961, cysteine 955-cysteine 971, cysteine 976-cysteine 989, cysteine 984-cysteine 1002, cysteine 996-cysteine 1011, cysteine 1015-cysteine 1027, cysteine 1022-cysteine 1040, cysteine 1034-cysteine 1051, cysteine 1062-cysteine 1075, cysteine 1069-cysteine 1088, cysteine 1082-cysteine 1097, cysteine 1104-cysteine 1118, cysteine 1112-cysteine 1131, cysteine 1125-cysteine 1140, cysteine 1145-cysteine 1159, cysteine 1152-cysteine 1172, cysteine 1166-cysteine 1182, cysteine 1185-cysteine 1196, cysteine 1192-cysteine 1206, cysteine 1208-cysteine 1221, cysteine 1227-cysteine 1237, cysteine 1233-cysteine 1246, and cysteine 1248-cysteine 1261. LDL-receptor class A domains follow at residues 852–892, 893–933, 934–973, 974–1013, 1013–1053, 1060–1099, 1102–1142, and 1143–1182; these read PQCQ…LCHQ, HTCP…TCSA, RTCP…SCAY, PTCF…GCSH, HSCS…NCTN, GGCH…SCEG, HVCD…NCES, and LACR…GELC. Ca(2+)-binding residues include tryptophan 871, aspartate 874, aspartate 876, aspartate 878, aspartate 884, and glutamate 885. Residue asparagine 928 is glycosylated (N-linked (GlcNAc...) asparagine). Ca(2+) is bound by residues tryptophan 1032, aspartate 1035, aspartate 1037, aspartate 1039, aspartate 1045, and glutamate 1046. A glycan (N-linked (GlcNAc...) asparagine) is linked at asparagine 1050. Residues tryptophan 1080, aspartate 1083, aspartate 1085, aspartate 1087, aspartate 1093, and glutamate 1094 each contribute to the Ca(2+) site. Asparagine 1154 and asparagine 1155 each carry an N-linked (GlcNAc...) asparagine glycan. EGF-like domains are found at residues 1183-1222 and 1223-1262; these read DQCS…HTCQ and IQSY…ESCR. N-linked (GlcNAc...) asparagine glycans are attached at residues asparagine 1195 and asparagine 1218. LDL-receptor class B repeat units lie at residues 1309 to 1355, 1356 to 1398, 1399 to 1445, 1446 to 1490, and 1491 to 1531; these read SALY…DWIA, GNIY…DPRD, GILF…DYLE, KRIL…YGGE, and VYWT…YHPS. N-linked (GlcNAc...) (complex) asparagine glycosylation is present at asparagine 1511. The EGF-like 7 domain occupies 1536–1579; the sequence is APNPCEANGGQGPCSHLCLINYNRTVSCACPHLMKLHKDNTTCY. 3 disulfide bridges follow: cysteine 1540–cysteine 1553, cysteine 1549–cysteine 1563, and cysteine 1565–cysteine 1578. N-linked (GlcNAc...) asparagine glycosylation is found at asparagine 1558, asparagine 1575, asparagine 1616, and asparagine 1645. 4 LDL-receptor class B repeats span residues 1627–1669, 1670–1713, 1714–1753, and 1754–1798; these read QRVY…DWVS, RNLF…HPLR, GKLY…DFPE, and SKLY…MGDK. N-linked (GlcNAc...) asparagine glycosylation is found at asparagine 1723, asparagine 1733, asparagine 1763, and asparagine 1825. Residues 1846–1887 form the EGF-like 8 domain; that stretch reads GTNPCSVNNGDCSQLCLPTSETTRSCMCTAGYSLRSGQQACE. 3 cysteine pairs are disulfide-bonded: cysteine 1850/cysteine 1861, cysteine 1857/cysteine 1871, and cysteine 1873/cysteine 1886. N-linked (GlcNAc...) asparagine glycosylation occurs at asparagine 1933. LDL-receptor class B repeat units follow at residues 1934 to 1976, 1977 to 2019, 2020 to 2063, and 2064 to 2107; these read DTIY…DWIA, GNIY…HPEK, GYLF…DYQD, and GKLY…FEDF. An N-linked (GlcNAc...) asparagine glycan is attached at asparagine 1995. Lysine 2009 carries the N6-acetyllysine modification. Asparagine 2048 carries an N-linked (GlcNAc...) asparagine glycan. N-linked (GlcNAc...) asparagine glycosylation is found at asparagine 2117 and asparagine 2127. The EGF-like 9 domain maps to 2155–2195; that stretch reads GTNVCAVANGGCQQLCLYRGRGQRACACAHGMLAEDGASCR. 3 disulfides stabilise this stretch: cysteine 2159-cysteine 2170, cysteine 2166-cysteine 2180, and cysteine 2182-cysteine 2194. LDL-receptor class B repeat units follow at residues 2253–2294, 2295–2343, 2344–2388, 2389–2431, and 2432–2473; these read NRIF…HRGW, DTLY…DECQ, NLMF…DHRA, EKLY…YGEH, and IFWT…VAND. An N-linked (GlcNAc...) asparagine glycan is attached at asparagine 2472. An EGF-like 10 domain is found at 2478-2518; that stretch reads ELSPCRINNGGCQDLCLLTHQGHVNCSCRGGRILQDDLTCR. 3 disulfide bridges follow: cysteine 2482–cysteine 2493, cysteine 2489–cysteine 2503, and cysteine 2505–cysteine 2517. N-linked (GlcNAc...) asparagine glycosylation occurs at asparagine 2502. A glycan (N-linked (GlcNAc...) asparagine) is linked at asparagine 2521. 7 consecutive LDL-receptor class A domains span residues 2522-2563, 2564-2602, 2603-2641, 2642-2690, 2694-2732, 2732-2771, and 2772-2814; these read SSCR…YCNS, RRCK…PCNK, TACG…NCSA, TDCS…DCPG, PRCP…HCNK, KFCS…HCEG, and KTCG…GCLY. Disulfide bonds link cysteine 2524/cysteine 2537, cysteine 2532/cysteine 2550, cysteine 2544/cysteine 2561, cysteine 2566/cysteine 2578, cysteine 2573/cysteine 2591, and cysteine 2585/cysteine 2600. Asparagine 2539 is a glycosylation site (N-linked (GlcNAc...) asparagine). A glycan (N-linked (GlcNAc...) asparagine) is linked at asparagine 2601. 15 disulfides stabilise this stretch: cysteine 2605–cysteine 2617, cysteine 2612–cysteine 2630, cysteine 2624–cysteine 2639, cysteine 2644–cysteine 2666, cysteine 2660–cysteine 2679, cysteine 2673–cysteine 2688, cysteine 2696–cysteine 2708, cysteine 2703–cysteine 2721, cysteine 2715–cysteine 2730, cysteine 2734–cysteine 2746, cysteine 2741–cysteine 2759, cysteine 2753–cysteine 2769, cysteine 2774–cysteine 2787, cysteine 2781–cysteine 2800, and cysteine 2794–cysteine 2812. Residues asparagine 2620 and asparagine 2638 are each glycosylated (N-linked (GlcNAc...) asparagine). Residue asparagine 2815 is glycosylated (N-linked (GlcNAc...) asparagine). LDL-receptor class A domains are found at residues 2816 to 2855, 2856 to 2899, and 2902 to 2940; these read STCD…ECEY, PTCG…HCTS, and HKCN…RGCH. 15 disulfide bridges follow: cysteine 2818/cysteine 2830, cysteine 2825/cysteine 2843, cysteine 2837/cysteine 2853, cysteine 2858/cysteine 2870, cysteine 2865/cysteine 2884, cysteine 2878/cysteine 2897, cysteine 2904/cysteine 2917, cysteine 2912/cysteine 2930, cysteine 2924/cysteine 2939, cysteine 2944/cysteine 2956, cysteine 2952/cysteine 2965, cysteine 2967/cysteine 2980, cysteine 2986/cysteine 2996, cysteine 2992/cysteine 3005, and cysteine 3007/cysteine 3021. Asparagine 2905 carries N-linked (GlcNAc...) asparagine glycosylation. The EGF-like 11 domain maps to 2941–2981; the sequence is INECLSRKLSGCSQDCEDLKIGFKCRCRPGFRLKDDGRTCA. An EGF-like 12; calcium-binding domain is found at 2982 to 3022; that stretch reads DVDECSTTFPCSQRCINTHGSYKCLCVEGYAPRGGDPHSCK. N-linked (GlcNAc...) asparagine glycans are attached at residues asparagine 3048 and asparagine 3089. LDL-receptor class B repeat units follow at residues 3069 to 3113, 3114 to 3156, 3157 to 3200, 3201 to 3243, and 3244 to 3284; these read QMIY…DWVG, GNLY…DVQN, GYLY…DYVT, ERIY…FEDY, and VYWT…FHAL. Asparagine 3264 is a glycosylation site (N-linked (GlcNAc...) asparagine). The EGF-like 13 domain maps to 3290–3331; the sequence is PNHPCKVNNGGCSNLCLLSPGGGHKCACPTNFYLGSDGRTCV. Intrachain disulfides connect cysteine 3294/cysteine 3305, cysteine 3301/cysteine 3315, and cysteine 3317/cysteine 3330. 11 LDL-receptor class A domains span residues 3332–3371, 3372–3410, 3411–3450, 3451–3491, 3492–3533, 3534–3572, 3573–3611, 3611–3649, 3652–3692, 3693–3733, and 3739–3778; these read SNCT…DCPE, FKCR…NCDI, HVCL…DCPE, VTCA…NCTQ, MTCG…ECDE, RTCE…SCTP, RPCS…DCTP, PRCD…ACGT, RTCP…ECAR, FVCP…DCEP, and THCK…DCSI. N-linked (GlcNAc...) asparagine glycosylation occurs at asparagine 3333. Intrachain disulfides connect cysteine 3334/cysteine 3346, cysteine 3341/cysteine 3359, cysteine 3353/cysteine 3369, cysteine 3374/cysteine 3386, cysteine 3381/cysteine 3399, cysteine 3393/cysteine 3408, cysteine 3413/cysteine 3426, cysteine 3420/cysteine 3439, cysteine 3433/cysteine 3448, cysteine 3453/cysteine 3466, cysteine 3460/cysteine 3479, cysteine 3473/cysteine 3489, cysteine 3494/cysteine 3507, cysteine 3501/cysteine 3520, cysteine 3514/cysteine 3531, cysteine 3536/cysteine 3548, cysteine 3543/cysteine 3561, cysteine 3555/cysteine 3570, cysteine 3575/cysteine 3587, cysteine 3582/cysteine 3600, cysteine 3594/cysteine 3609, cysteine 3613/cysteine 3625, cysteine 3620/cysteine 3638, cysteine 3632/cysteine 3647, cysteine 3654/cysteine 3666, cysteine 3661/cysteine 3679, cysteine 3673/cysteine 3690, cysteine 3695/cysteine 3709, cysteine 3703/cysteine 3722, cysteine 3716/cysteine 3731, cysteine 3741/cysteine 3754, cysteine 3749/cysteine 3767, cysteine 3761/cysteine 3776, cysteine 3785/cysteine 3798, cysteine 3792/cysteine 3807, cysteine 3809/cysteine 3822, cysteine 3828/cysteine 3838, cysteine 3834/cysteine 3847, and cysteine 3849/cysteine 3860. Asparagine 3488 carries an N-linked (GlcNAc...) asparagine glycan. N-linked (GlcNAc...) asparagine glycosylation occurs at asparagine 3662. EGF-like domains are found at residues 3781–3823 and 3824–3861; these read KLTS…PGCQ and DINE…NTCK. N-linked (GlcNAc...) asparagine glycosylation occurs at asparagine 3788. Asparagine 3839 carries an N-linked (GlcNAc...) asparagine glycan. LDL-receptor class B repeat units follow at residues 3912–3954, 3970–4012, 4013–4056, and 4057–4101; these read GRVY…HLNI, GNVY…DPLR, GTMY…DYHN, and ERLY…FEDY. Residues 3940–3943 carry the Recognition site for proteolytical processing motif; the sequence is RHRR. Asparagine 3953 carries N-linked (GlcNAc...) asparagine glycosylation. Residues asparagine 4075 and asparagine 4125 are each glycosylated (N-linked (GlcNAc...) asparagine). 7 consecutive EGF-like domains span residues 4147–4183, 4196–4232, 4232–4268, 4268–4304, 4304–4340, 4340–4375, and 4373–4409; these read VTNP…GTCV, RPGT…DKCE, ELDQ…PKCT, TQQV…DRCQ, QYRQ…SRCE, EVNK…PSCL, and SCLT…PRCE. Disulfide bonds link cysteine 4151-cysteine 4160, cysteine 4156-cysteine 4169, cysteine 4171-cysteine 4182, cysteine 4200-cysteine 4210, cysteine 4204-cysteine 4220, cysteine 4222-cysteine 4231, cysteine 4236-cysteine 4246, cysteine 4240-cysteine 4256, cysteine 4258-cysteine 4267, cysteine 4272-cysteine 4282, cysteine 4276-cysteine 4292, cysteine 4294-cysteine 4303, cysteine 4308-cysteine 4318, cysteine 4312-cysteine 4328, cysteine 4330-cysteine 4339, cysteine 4344-cysteine 4352, and cysteine 4347-cysteine 4363. Asparagine 4179 carries N-linked (GlcNAc...) asparagine glycosylation. Residues asparagine 4278 and asparagine 4279 are each glycosylated (N-linked (GlcNAc...) asparagine). A glycan (N-linked (GlcNAc...) asparagine) is linked at asparagine 4364. 4 cysteine pairs are disulfide-bonded: cysteine 4365/cysteine 4374, cysteine 4377/cysteine 4387, cysteine 4381/cysteine 4397, and cysteine 4399/cysteine 4408. Residues 4420–4444 form a helical membrane-spanning segment; it reads HIASILIPLLLLLLLVLVAGVVFWY. Residues 4445–4544 are Cytoplasmic-facing; it reads KRRVQGAKGF…PEDEIGDPLA (100 aa). The segment at 4445 to 4544 is interaction with MAFB; sequence KRRVQGAKGF…PEDEIGDPLA (100 aa). Residue threonine 4460 is modified to Phosphothreonine. Positions 4502 to 4507 match the NPXY motif motif; that stretch reads FTNPVY. Phosphotyrosine is present on tyrosine 4507. 3 positions are modified to phosphoserine: serine 4517, serine 4520, and serine 4523.

It belongs to the LDLR family. As to quaternary structure, heterodimer of an 85-kDa membrane-bound carboxyl subunit and a non-covalently attached 515-kDa N-terminal subunit. Intracellular domain interacts with MAFB. Found in a complex with PID1/PCLI1, LRP1 and CUBNI. Interacts with SNX17, PID1/PCLI1, PDGF and CUBN. The intracellular domain interacts with SHC1, GULP1 and DAB1. Can weakly interact (via NPXY motif) with DAB2 (via PID domain); the interaction is enhanced by tyrosine phosphorylation of the NPXY motif. Interacts with MDK; promotes neuronal survival. Interacts with LRPAP1; this interaction is followed by rapid internalization. Interacts with uPA/PLAU and PAI1/SERPINE1, either individually or in complex with each other, leading to rapid endocytosis; this interaction is abolished in the presence of LRPAP1/RAP. Also interacts with tPA/PLAT alone or in complex with SERPINE1. Interacts with the urokinase receptor PLAUR; this interaction leads to PLAUR internalization and is impaired in the presence of SORL1. Interacts with PDGFB. Interacts with TAU/MAPT, leading to endocytosis; this interaction is reduced in the presence of LRPAP1/RAP. Interacts with IGFBP3; this interaction mediates cell growth inhibition independently of IGF1. Interacts with ADGRG6. (Microbial infection) Interacts with bacterial exotoxins. In terms of assembly, (Microbial infection) Interacts with Rift valley fever virus (RVFV) glycoprotein N; this interaction facilitates virus entry. In terms of processing, cleaved into a 85 kDa membrane-spanning subunit (LRP-85) and a 515 kDa large extracellular domain (LRP-515) that remains non-covalently associated. Gamma-secretase-dependent cleavage of LRP-85 releases the intracellular domain from the membrane. The N-terminus is blocked. Post-translationally, phosphorylated on serine and threonine residues. In terms of processing, phosphorylated on tyrosine residues upon stimulation with PDGF. Tyrosine phosphorylation promotes interaction with SHC1. Most abundant in liver, brain and lung.

Its subcellular location is the cell membrane. The protein resides in the membrane. It localises to the coated pit. The protein localises to the cytoplasm. It is found in the nucleus. Its subcellular location is the golgi outpost. The protein resides in the cytoskeleton. It localises to the microtubule organizing center. Endocytic receptor involved in endocytosis and in phagocytosis of apoptotic cells. Required for early embryonic development. Involved in cellular lipid homeostasis. Involved in the plasma clearance of chylomicron remnants and activated LRPAP1 (alpha 2-macroglobulin), as well as the local metabolism of complexes between plasminogen activators and their endogenous inhibitors. Acts as an LRPAP1 alpha-2-macroglobulin receptor. Acts as TAU/MAPT receptor and controls the endocytosis of TAU/MAPT as well as its subsequent spread. May modulate cellular events, such as APP metabolism, kinase-dependent intracellular signaling, neuronal calcium signaling as well as neurotransmission. Also acts as a receptor for IGFBP3 to mediate cell growth inhibition. In terms of biological role, (Microbial infection) Functions as a receptor for Pseudomonas aeruginosa exotoxin A. The chain is Prolow-density lipoprotein receptor-related protein 1 from Homo sapiens (Human).